We begin with the raw amino-acid sequence, 305 residues long: Homoserine kinase (305 aa).

93–103 (PLSRGLGSSAT) is an ATP binding site.

The protein belongs to the GHMP kinase family. Homoserine kinase subfamily.

The protein resides in the cytoplasm. It catalyses the reaction L-homoserine + ATP = O-phospho-L-homoserine + ADP + H(+). The protein operates within amino-acid biosynthesis; L-threonine biosynthesis; L-threonine from L-aspartate: step 4/5. Catalyzes the ATP-dependent phosphorylation of L-homoserine to L-homoserine phosphate. This Picosynechococcus sp. (strain ATCC 27264 / PCC 7002 / PR-6) (Agmenellum quadruplicatum) protein is Homoserine kinase.